Reading from the N-terminus, the 542-residue chain is Phosphoacetylglucosamine mutase 2 (542 aa).

Catalysis depends on serine 77, which acts as the Phosphoserine intermediate. A Mg(2+)-binding site is contributed by serine 77. A phosphoserine mark is found at serine 77 and serine 82. Aspartate 292, aspartate 294, and aspartate 296 together coordinate Mg(2+). Substrate-binding positions include glutamate 385 to asparagine 387, arginine 510 to threonine 514, and arginine 519.

This sequence belongs to the phosphohexose mutase family. The cofactor is Mg(2+).

Its subcellular location is the cytoplasm. It is found in the nucleus. It carries out the reaction N-acetyl-alpha-D-glucosamine 1-phosphate = N-acetyl-D-glucosamine 6-phosphate. It functions in the pathway nucleotide-sugar biosynthesis; UDP-N-acetyl-alpha-D-glucosamine biosynthesis; N-acetyl-alpha-D-glucosamine 1-phosphate from alpha-D-glucosamine 6-phosphate (route I): step 2/2. Catalyzes the conversion of GlcNAc-6-P into GlcNAc-1-P during the synthesis of uridine diphosphate/UDP-GlcNAc, which is a biosynthetic precursor of chitin and also supplies the amino sugars for N-linked oligosaccharides of glycoproteins. This Schizosaccharomyces pombe (strain 972 / ATCC 24843) (Fission yeast) protein is Phosphoacetylglucosamine mutase 2.